Here is a 260-residue protein sequence, read N- to C-terminus: Thrombin-like enzyme acutobin (260 aa).

The N-terminal stretch at 1 to 18 (MVLIRVLANLLILQLSYA) is a signal peptide. Residues 19-24 (QKSSEL) constitute a propeptide that is removed on maturation. A Peptidase S1 domain is found at 25–251 (VIGGVECDIN…YNDWIRSITA (227 aa)). 6 disulfide bridges follow: Cys31/Cys165, Cys52/Cys68, Cys102/Cys258, Cys144/Cys212, Cys176/Cys191, and Cys202/Cys227. Residue His67 is the Charge relay system of the active site. Residues Asn101 and Asn105 are each glycosylated (N-linked (GlcNAc...) asparagine). Residue Asp112 is the Charge relay system of the active site. Asn124 carries N-linked (GlcNAc...) asparagine glycosylation. Catalysis depends on Ser206, which acts as the Charge relay system. An N-linked (GlcNAc...) asparagine glycan is attached at Asn253.

This sequence belongs to the peptidase S1 family. Snake venom subfamily. In terms of assembly, monomer. Post-translationally, N-glycosylated. Expressed by the venom gland.

It is found in the secreted. Thrombin-like snake venom serine protease that coagulates human fibrinogen by hydrolysis of the alpha chains (FGA). The sequence is that of Thrombin-like enzyme acutobin from Deinagkistrodon acutus (Hundred-pace snake).